Here is a 46-residue protein sequence, read N- to C-terminus: Large ribosomal subunit protein bL34c (46 aa).

The protein belongs to the bacterial ribosomal protein bL34 family.

It is found in the plastid. The protein resides in the chloroplast. The sequence is that of Large ribosomal subunit protein bL34c from Pyropia yezoensis (Susabi-nori).